Reading from the N-terminus, the 129-residue chain is Putative F-box protein At3g42722 (129 aa).

An F-box domain is found at methionine 4–asparagine 50.

This is Putative F-box protein At3g42722 from Arabidopsis thaliana (Mouse-ear cress).